We begin with the raw amino-acid sequence, 228 residues long: Caspase recruitment domain-containing protein 19 (228 aa).

Cys-7 and Cys-77 are joined by a disulfide. The CARD domain occupies 8 to 99 (DRLVQDTPFL…PLHSRLPSRH (92 aa)). Phosphoserine is present on Val-113.

In terms of assembly, associates with BCL10 by CARD-CARD interaction. Expressed in ovary, testis, placenta, skeletal muscle, kidney, lung, heart and liver (at protein level). Expressed in thymus and brain.

The protein resides in the nucleus. Its subcellular location is the endoplasmic reticulum membrane. It localises to the mitochondrion membrane. In terms of biological role, plays a role in inhibiting the effects of BCL10-induced activation of NF-kappa-B. May inhibit the phosphorylation of BCL10 in a CARD-dependent manner. This chain is Caspase recruitment domain-containing protein 19 (CARD19), found in Homo sapiens (Human).